The sequence spans 104 residues: uncharacterized protein (104 aa).

Positions 58–71 (PERDRARRDRDHHP) are enriched in basic and acidic residues. Residues 58 to 84 (PERDRARRDRDHHPWSRSRSQLSPRMA) are disordered.

This is an uncharacterized protein from Mycobacterium tuberculosis (strain ATCC 25618 / H37Rv).